Here is a 347-residue protein sequence, read N- to C-terminus: Pre-B-cell leukemia transcription factor 1 (347 aa).

The tract at residues 1–40 is disordered; it reads MDDQPRLMHSHPGVGMAGHPSLSQHMQDGTGANEGEGGRK. In terms of domain architecture, PBC spans 38-232; it reads GRKQDIGDIL…VMILRSRFLD (195 aa). The tract at residues 45-124 is PBC-A; sequence DILQQIMTIT…EGVAGPEKGG (80 aa). The tract at residues 127-232 is PBC-B; it reads AAAAAAAAAS…VMILRSRFLD (106 aa). Positions 233 to 295 form a DNA-binding region, homeobox; TALE-type; sequence ARRKRRNFNK…NKRIRYKKNI (63 aa). Residues 318–331 are compositionally biased toward polar residues; that stretch reads VHGSQANSPSTPSS. The interval 318–347 is disordered; the sequence is VHGSQANSPSTPSSAGGYPSPCYQSDRRIQ.

It belongs to the TALE/PBX homeobox family. As to quaternary structure, forms a heterodimer with meis1; the interaction is necessary for neural fate induction.

Its subcellular location is the nucleus. Functionally, acts as a transcriptional activator in complex with isoform 2 of meis1, to induce posterior neural and neural crest gene expression, and thereby specify hindbrain and neural crest cell fate. Binds to a highly conserved region in the promoter of the neural crest gene zic3. Required for the nuclear transport or retention of meis1. The protein is Pre-B-cell leukemia transcription factor 1 of Xenopus tropicalis (Western clawed frog).